A 446-amino-acid chain; its full sequence is Glucose transporter GlcP (446 aa).

Topologically, residues Met-1–Tyr-6 are cytoplasmic. A helical membrane pass occupies residues Leu-7–Leu-31. At Phe-32 to Pro-38 the chain is on the extracellular side. A helical transmembrane segment spans residues Leu-39–Pro-64. At Leu-65 to Gly-70 the chain is on the cytoplasmic side. A helical transmembrane segment spans residues Arg-71–Ala-90. Over Ala-91–Asn-94 the chain is Extracellular. Residues Leu-95–Glu-122 form a helical membrane-spanning segment. Over Met-123–Arg-129 the chain is Cytoplasmic. The chain crosses the membrane as a helical span at residues Gly-130 to Tyr-152. The Extracellular segment spans residues Ala-153–Phe-154. Residues Ala-155–Phe-180 traverse the membrane as a helical segment. Residues Met-181 to Pro-234 lie on the Cytoplasmic side of the membrane. The chain crosses the membrane as a helical span at residues Trp-235–Ala-269. Over Gly-270–Gly-272 the chain is Extracellular. Residues Glu-273–Ile-295 form a helical membrane-spanning segment. Over Phe-296–Arg-303 the chain is Cytoplasmic. The chain crosses the membrane as a helical span at residues Lys-304–Leu-324. Residues Ile-325–Gly-329 are Extracellular-facing. A helical transmembrane segment spans residues Ile-330–Leu-363. Residues Phe-364–Gly-370 are Cytoplasmic-facing. Residues Ala-371–Ser-399 traverse the membrane as a helical segment. The Extracellular portion of the chain corresponds to Thr-400–Glu-401. A helical transmembrane segment spans residues Trp-402–Lys-420. Residues Phe-421 to Glu-446 lie on the Cytoplasmic side of the membrane.

Belongs to the major facilitator superfamily. Sugar transporter (TC 2.A.1.1) family.

It localises to the cell membrane. Its activity is regulated as follows. Inhibited by carbonyl cyanide m-chlorophenylhydrazone (CCCP) and by the human glucose transport inhibitors cytochalasin B, phloretin, and forskolin. Its function is as follows. Transporter highly specific for glucose uptake. The chain is Glucose transporter GlcP from Staphylococcus epidermidis (strain ATCC 12228 / FDA PCI 1200).